The chain runs to 420 residues: Gamma-glutamyl phosphate reductase (420 aa).

This sequence belongs to the gamma-glutamyl phosphate reductase family.

It localises to the cytoplasm. The enzyme catalyses L-glutamate 5-semialdehyde + phosphate + NADP(+) = L-glutamyl 5-phosphate + NADPH + H(+). The protein operates within amino-acid biosynthesis; L-proline biosynthesis; L-glutamate 5-semialdehyde from L-glutamate: step 2/2. Its function is as follows. Catalyzes the NADPH-dependent reduction of L-glutamate 5-phosphate into L-glutamate 5-semialdehyde and phosphate. The product spontaneously undergoes cyclization to form 1-pyrroline-5-carboxylate. This Neisseria meningitidis serogroup B (strain ATCC BAA-335 / MC58) protein is Gamma-glutamyl phosphate reductase.